We begin with the raw amino-acid sequence, 126 residues long: uncharacterized protein (126 aa).

T68 carries the phosphothreonine modification.

This is an uncharacterized protein from Pseudomonas aeruginosa (strain UCBPP-PA14).